A 304-amino-acid chain; its full sequence is Acetylglutamate kinase (304 aa).

Residues 69 to 70, Arg-91, and Asn-202 each bind substrate; that span reads GG.

This sequence belongs to the acetylglutamate kinase family. ArgB subfamily.

Its subcellular location is the cytoplasm. It catalyses the reaction N-acetyl-L-glutamate + ATP = N-acetyl-L-glutamyl 5-phosphate + ADP. The protein operates within amino-acid biosynthesis; L-arginine biosynthesis; N(2)-acetyl-L-ornithine from L-glutamate: step 2/4. Catalyzes the ATP-dependent phosphorylation of N-acetyl-L-glutamate. This chain is Acetylglutamate kinase, found in Caulobacter sp. (strain K31).